Consider the following 93-residue polypeptide: Large ribosomal subunit protein uL23 (93 aa).

This sequence belongs to the universal ribosomal protein uL23 family. As to quaternary structure, part of the 50S ribosomal subunit. Contacts protein L29, and trigger factor when it is bound to the ribosome.

In terms of biological role, one of the early assembly proteins it binds 23S rRNA. One of the proteins that surrounds the polypeptide exit tunnel on the outside of the ribosome. Forms the main docking site for trigger factor binding to the ribosome. This chain is Large ribosomal subunit protein uL23, found in Campylobacter fetus subsp. fetus (strain 82-40).